A 162-amino-acid chain; its full sequence is Transcription antitermination protein RfaH (162 aa).

Belongs to the RfaH family. Interacts with both the nontemplate DNA and the RNA polymerase (RNAP). Monomer in solution.

Enhances distal genes transcription elongation in a specialized subset of operons that encode extracytoplasmic components. RfaH is recruited into a multi-component RNA polymerase complex by the ops element, which is a short conserved DNA sequence located downstream of the main promoter of these operons. Once bound, RfaH suppresses pausing and inhibits Rho-dependent and intrinsic termination at a subset of sites. Termination signals are bypassed, which allows complete synthesis of long RNA chains. Enhances expression of several operons involved in synthesis of lipopolysaccharides, exopolysaccharides, hemolysin, and sex factor. Also negatively controls expression and surface presentation of AG43 and possibly another AG43-independent factor that mediates cell-cell interactions and biofilm formation. This is Transcription antitermination protein RfaH from Escherichia coli (strain K12).